The primary structure comprises 655 residues: p-hydroxybenzoic acid efflux pump subunit AaeB (655 aa).

11 helical membrane-spanning segments follow: residues 13–33, 38–58, 67–89, 93–112, 121–141, 152–172, 370–390, 407–427, 431–451, 459–479, and 482–502; these read FAVKLATAIVLALFVGFHFQL, WAVLTAAIVAAGPAFAAGGEP, GFLRIIGTFIGCIAGLVIIIAMI, LLMILVCCIWAGFCTWISSL, WGLAGYTALIIVITIQPEPLL, EIVIGIVCAIMADLLFSPRSI, LFWLWTGWTSGSGAMVMIAVV, FIYGTLAALPLGLLYFLVIIP, QSMLLLCISLAVLGFFLGIEV, MGALASTINIIVLDNPMTFHF, and FLDSALGQIVGCVLAFTVILL.

This sequence belongs to the aromatic acid exporter ArAE (TC 2.A.85) family.

Its subcellular location is the cell inner membrane. In terms of biological role, forms an efflux pump with AaeA. Could function as a metabolic relief valve, allowing to eliminate certain compounds when they accumulate to high levels in the cell. In Escherichia coli O9:H4 (strain HS), this protein is p-hydroxybenzoic acid efflux pump subunit AaeB.